The sequence spans 147 residues: NADH-ubiquinone oxidoreductase chain 3 (147 aa).

3 helical membrane-spanning segments follow: residues 6-26 (LFIL…LVFA), 60-80 (AICF…VGSL), and 84-104 (TFYS…GFVF).

The protein belongs to the complex I subunit 3 family.

It is found in the mitochondrion membrane. The enzyme catalyses a ubiquinone + NADH + 5 H(+)(in) = a ubiquinol + NAD(+) + 4 H(+)(out). Functionally, core subunit of the mitochondrial membrane respiratory chain NADH dehydrogenase (Complex I) that is believed to belong to the minimal assembly required for catalysis. Complex I functions in the transfer of electrons from NADH to the respiratory chain. The immediate electron acceptor for the enzyme is believed to be ubiquinone. In Neurospora crassa (strain ATCC 24698 / 74-OR23-1A / CBS 708.71 / DSM 1257 / FGSC 987), this protein is NADH-ubiquinone oxidoreductase chain 3 (ndh-3).